A 591-amino-acid polypeptide reads, in one-letter code: Proteasome-associated ATPase (591 aa).

The stretch at 10–77 (VAAAEELHAL…LREEVDRLGQ (68 aa)) forms a coiled coil. 278-283 (GCGKTL) is a binding site for ATP. The segment at 590–591 (YL) is docks into pockets in the proteasome alpha-ring.

It belongs to the AAA ATPase family. Homohexamer. Assembles into a hexameric ring structure that likely caps the 20S proteasome core. Can form a complex composed of two stacked hexameric rings in vitro. Probably interacts with the prokaryotic ubiquitin-like protein Pup through a hydrophobic interface; the expected interacting region of ARC lies in its N-terminal coiled-coil domain. There is likely one Pup binding site per ARC hexamer ring. Upon ATP-binding, the C-terminus of ARC probably interacts with the alpha-rings of the proteasome core, possibly by binding to the intersubunit pockets.

The protein operates within protein degradation; proteasomal Pup-dependent pathway. With respect to regulation, ATPase activity is inhibited by N-ethylmaleimide (NEM) but not by sodium azide. ATPase which is responsible for recognizing, binding, unfolding and translocation of pupylated proteins into the bacterial 20S proteasome core particle. May be essential for opening the gate of the 20S proteasome via an interaction with its C-terminus, thereby allowing substrate entry and access to the site of proteolysis. Thus, the C-termini of the proteasomal ATPase may function like a 'key in a lock' to induce gate opening and therefore regulate proteolysis. The sequence is that of Proteasome-associated ATPase from Rhodococcus erythropolis (Arthrobacter picolinophilus).